A 340-amino-acid chain; its full sequence is Adenosine deaminase (340 aa).

Residues His-15 and His-17 each contribute to the Zn(2+) site. Residues His-17, Asp-19, and Gly-172 each coordinate substrate. His-199 lines the Zn(2+) pocket. Glu-202 serves as the catalytic Proton donor. A Zn(2+)-binding site is contributed by Asp-279.

This sequence belongs to the metallo-dependent hydrolases superfamily. Adenosine and AMP deaminases family. Adenosine deaminase subfamily. The cofactor is Zn(2+).

The enzyme catalyses adenosine + H2O + H(+) = inosine + NH4(+). It carries out the reaction 2'-deoxyadenosine + H2O + H(+) = 2'-deoxyinosine + NH4(+). Its function is as follows. Catalyzes the hydrolytic deamination of adenosine and 2-deoxyadenosine. The sequence is that of Adenosine deaminase from Streptococcus agalactiae serotype Ia (strain ATCC 27591 / A909 / CDC SS700).